The sequence spans 97 residues: Citrate lyase acyl carrier protein (97 aa).

Ser-14 carries the O-(phosphoribosyl dephospho-coenzyme A)serine modification.

It belongs to the CitD family. Oligomer with a subunit composition of (alpha,beta,gamma)6.

The protein localises to the cytoplasm. Functionally, covalent carrier of the coenzyme of citrate lyase. This Escherichia fergusonii (strain ATCC 35469 / DSM 13698 / CCUG 18766 / IAM 14443 / JCM 21226 / LMG 7866 / NBRC 102419 / NCTC 12128 / CDC 0568-73) protein is Citrate lyase acyl carrier protein.